A 498-amino-acid polypeptide reads, in one-letter code: ATP synthase subunit beta, chloroplastic (498 aa).

172–179 (GGAGVGKT) lines the ATP pocket.

The protein belongs to the ATPase alpha/beta chains family. In terms of assembly, F-type ATPases have 2 components, CF(1) - the catalytic core - and CF(0) - the membrane proton channel. CF(1) has five subunits: alpha(3), beta(3), gamma(1), delta(1), epsilon(1). CF(0) has four main subunits: a(1), b(1), b'(1) and c(9-12).

The protein localises to the plastid. The protein resides in the chloroplast thylakoid membrane. The catalysed reaction is ATP + H2O + 4 H(+)(in) = ADP + phosphate + 5 H(+)(out). Its function is as follows. Produces ATP from ADP in the presence of a proton gradient across the membrane. The catalytic sites are hosted primarily by the beta subunits. The polypeptide is ATP synthase subunit beta, chloroplastic (Helianthus annuus (Common sunflower)).